Consider the following 212-residue polypeptide: Membrane-bound lytic murein transglycosylase E (212 aa).

The protein belongs to the transglycosylase Slt family.

It catalyses the reaction Exolytic cleavage of the (1-&gt;4)-beta-glycosidic linkage between N-acetylmuramic acid (MurNAc) and N-acetylglucosamine (GlcNAc) residues in peptidoglycan, from either the reducing or the non-reducing ends of the peptidoglycan chains, with concomitant formation of a 1,6-anhydrobond in the MurNAc residue.. In terms of biological role, murein-degrading enzyme. May play a role in recycling of muropeptides during cell elongation and/or cell division. The polypeptide is Membrane-bound lytic murein transglycosylase E (mltE) (Buchnera aphidicola subsp. Baizongia pistaciae (strain Bp)).